Consider the following 1392-residue polypeptide: Condensin complex subunit 1 (1392 aa).

Residues 1–593 (MSPHNFEFHL…TGSKDSPSVP (593 aa)) form an interaction with SMC2 and SMC4 region. Residues S20 and S575 each carry the phosphoserine modification. 3 disordered regions span residues 569-602 (EAST…QSND), 945-966 (REEQ…ETTM), and 1293-1392 (FETG…RHRS). Basic and acidic residues predominate over residues 945–960 (REEQEHRAKEPKEKTA). Phosphoserine occurs at positions 1300, 1305, 1320, and 1323. A Phosphothreonine modification is found at T1329. The short motif at 1332 to 1353 (PRRTKPGRPQTQQRKKSQRKAK) is the Bipartite nuclear localization signal element. Over residues 1344–1353 (QRKKSQRKAK) the composition is skewed to basic residues. A phosphoserine mark is found at S1358, S1361, S1362, and S1367. Acidic residues predominate over residues 1360–1373 (ESSEDELSAEMTEE). Phosphothreonine; by CDK1 occurs at positions 1375 and 1380. S1386 is subject to Phosphoserine.

Belongs to the CND1 (condensin subunit 1) family. As to quaternary structure, component of the condensin complex, which contains the SMC2 and SMC4 heterodimer, and three non SMC subunits that probably regulate the complex: NCAPH/BRRN1, NCAPD2/CAPD2 and NCAPG. Interacts with histones H1 and H3. Phosphorylated by CDK1. Its phosphorylation, as well as that of NCAPH and NCAPG subunits, activates the condensin complex and is required for chromosome condensation.

Its subcellular location is the nucleus. The protein localises to the cytoplasm. It is found in the chromosome. In terms of biological role, regulatory subunit of the condensin complex, a complex required for conversion of interphase chromatin into mitotic-like condense chromosomes. The condensin complex probably introduces positive supercoils into relaxed DNA in the presence of type I topoisomerases and converts nicked DNA into positive knotted forms in the presence of type II topoisomerases. May target the condensin complex to DNA via its C-terminal domain. May promote the resolution of double-strand DNA catenanes (intertwines) between sister chromatids. Condensin-mediated compaction likely increases tension in catenated sister chromatids, providing directionality for type II topoisomerase-mediated strand exchanges toward chromatid decatenation. Required for decatenation of non-centromeric ultrafine DNA bridges during anaphase. Early in neurogenesis, may play an essential role to ensure accurate mitotic chromosome condensation in neuron stem cells, ultimately affecting neuron pool and cortex size. This Mus musculus (Mouse) protein is Condensin complex subunit 1 (Ncapd2).